A 291-amino-acid polypeptide reads, in one-letter code: Serine/threonine-protein phosphatase Pgam5, mitochondrial (291 aa).

The chain crosses the membrane as a helical span at residues 7–23; it reads FACGTGAGLAAFYLQRL. A disordered region spans residues 59 to 78; that stretch reads KSLVRPQKNEQPQEQNRYNS. The segment covering 67–77 has biased composition (polar residues); it reads NEQPQEQNRYN.

Belongs to the phosphoglycerate mutase family. BPG-dependent PGAM subfamily. In terms of assembly, interacts with Pk92B/ASK1.

It localises to the mitochondrion outer membrane. The catalysed reaction is O-phospho-L-seryl-[protein] + H2O = L-seryl-[protein] + phosphate. The enzyme catalyses O-phospho-L-threonyl-[protein] + H2O = L-threonyl-[protein] + phosphate. Its function is as follows. Displays phosphatase activity for serine/threonine residues, and dephosphorylates and activates Pk92B kinase. Has apparently no phosphoglycerate mutase activity. In Drosophila willistoni (Fruit fly), this protein is Serine/threonine-protein phosphatase Pgam5, mitochondrial.